The sequence spans 74 residues: Pelophylaxin-2 (74 aa).

A signal peptide spans 1-22; the sequence is MFTMKKSLLFFFFLGTIALSLC. Positions 23 to 42 are excised as a propeptide; it reads EEERGADEEENGAEITDEEV. An intrachain disulfide couples Cys-68 to Cys-74.

Expressed by the skin glands.

The protein localises to the secreted. Functionally, antimicrobial peptide. The sequence is that of Pelophylaxin-2 from Pelophylax fukienensis (Fukien gold-striped pond frog).